The primary structure comprises 499 residues: Maturase K (499 aa).

The protein belongs to the intron maturase 2 family. MatK subfamily.

It localises to the plastid. The protein localises to the chloroplast. In terms of biological role, usually encoded in the trnK tRNA gene intron. Probably assists in splicing its own and other chloroplast group II introns. This Neltuma juliflora (Mesquite) protein is Maturase K.